Consider the following 194-residue polypeptide: Isopentenyl-diphosphate Delta-isomerase (194 aa).

His35 and His42 together coordinate Mn(2+). One can recognise a Nudix hydrolase domain in the interval Pro40–Asp174. Residue Cys77 is part of the active site. Residue His79 coordinates Mn(2+). Glu97 serves as a coordination point for Mg(2+). Mn(2+) contacts are provided by Glu124 and Glu126. Residue Glu126 is part of the active site.

It belongs to the IPP isomerase type 1 family. Requires Mg(2+) as cofactor. It depends on Mn(2+) as a cofactor.

The protein resides in the cytoplasm. It carries out the reaction isopentenyl diphosphate = dimethylallyl diphosphate. It participates in isoprenoid biosynthesis; dimethylallyl diphosphate biosynthesis; dimethylallyl diphosphate from isopentenyl diphosphate: step 1/1. Its function is as follows. Catalyzes the 1,3-allylic rearrangement of the homoallylic substrate isopentenyl (IPP) to its highly electrophilic allylic isomer, dimethylallyl diphosphate (DMAPP). The polypeptide is Isopentenyl-diphosphate Delta-isomerase (Frankia alni (strain DSM 45986 / CECT 9034 / ACN14a)).